Reading from the N-terminus, the 485-residue chain is Glutamyl-tRNA(Gln) amidotransferase subunit A (485 aa).

Catalysis depends on charge relay system residues lysine 74 and serine 149. Serine 173 functions as the Acyl-ester intermediate in the catalytic mechanism.

This sequence belongs to the amidase family. GatA subfamily. As to quaternary structure, heterotrimer of A, B and C subunits.

It carries out the reaction L-glutamyl-tRNA(Gln) + L-glutamine + ATP + H2O = L-glutaminyl-tRNA(Gln) + L-glutamate + ADP + phosphate + H(+). In terms of biological role, allows the formation of correctly charged Gln-tRNA(Gln) through the transamidation of misacylated Glu-tRNA(Gln) in organisms which lack glutaminyl-tRNA synthetase. The reaction takes place in the presence of glutamine and ATP through an activated gamma-phospho-Glu-tRNA(Gln). In Herminiimonas arsenicoxydans, this protein is Glutamyl-tRNA(Gln) amidotransferase subunit A.